We begin with the raw amino-acid sequence, 174 residues long: Shikimate kinase (174 aa).

ATP is bound at residue 14–19 (GAGKST). A Mg(2+)-binding site is contributed by S18. Substrate is bound by residues D36, R60, and G82. Residue R120 coordinates ATP. Residue R139 coordinates substrate. ATP is bound at residue Q156.

This sequence belongs to the shikimate kinase family. In terms of assembly, monomer. The cofactor is Mg(2+).

It is found in the cytoplasm. The catalysed reaction is shikimate + ATP = 3-phosphoshikimate + ADP + H(+). It participates in metabolic intermediate biosynthesis; chorismate biosynthesis; chorismate from D-erythrose 4-phosphate and phosphoenolpyruvate: step 5/7. Catalyzes the specific phosphorylation of the 3-hydroxyl group of shikimic acid using ATP as a cosubstrate. The chain is Shikimate kinase from Vibrio cholerae serotype O1 (strain ATCC 39541 / Classical Ogawa 395 / O395).